The primary structure comprises 232 residues: Peroxiredoxin (232 aa).

Residues 6–161 enclose the Thioredoxin domain; sequence PSIGEKFPEI…ILRLIESLQI (156 aa). The active-site Cysteine sulfenic acid (-SOH) intermediate is Cys48. Arg124 serves as a coordination point for substrate. Cys203 and Cys209 are oxidised to a cystine.

Belongs to the peroxiredoxin family. Prx6 subfamily. Homodecamer. Pentamer of dimers that assemble into a ring structure.

Its subcellular location is the cytoplasm. It catalyses the reaction a hydroperoxide + [thioredoxin]-dithiol = an alcohol + [thioredoxin]-disulfide + H2O. Its function is as follows. Thiol-specific peroxidase that catalyzes the reduction of hydrogen peroxide and organic hydroperoxides to water and alcohols, respectively. Plays a role in cell protection against oxidative stress by detoxifying peroxides. In Hyperthermus butylicus (strain DSM 5456 / JCM 9403 / PLM1-5), this protein is Peroxiredoxin.